A 313-amino-acid polypeptide reads, in one-letter code: Fe-S cluster assembly protein dre2 (313 aa).

Disordered regions lie at residues 1–25 (MSITIDTSVDIDLPTPPQSNGSQKR) and 151–187 (GRKKKDKTNGVNGVQNGVATNGASTNGVGMFDPAQNN). Positions 20–145 (NGSQKRNLLL…FEKPVQEAAV (126 aa)) are N-terminal SAM-like domain. Residues 146–203 (PLKLGGRKKKDKTNGVNGVQNGVATNGASTNGVGMFDPAQNNDDELIDEDALLSDDDL) form a linker region. Over residues 159–177 (NGVNGVQNGVATNGASTNG) the composition is skewed to polar residues. Residues Cys-213, Cys-225, Cys-228, and Cys-230 each coordinate [2Fe-2S] cluster. The interval 213-230 (CVPETAKKRRRPCKDCTC) is fe-S binding site A. Residues Cys-276, Cys-279, Cys-287, and Cys-290 each coordinate [4Fe-4S] cluster. 2 consecutive short sequence motifs (cx2C motif) follow at residues 276 to 279 (CNSC) and 287 to 290 (CSSC). Residues 276-290 (CNSCSLGDAFRCSSC) form a fe-S binding site B region.

Belongs to the anamorsin family. In terms of assembly, monomer. Interacts with tah18. Interacts with mia40. Requires [2Fe-2S] cluster as cofactor. [4Fe-4S] cluster is required as a cofactor.

The protein resides in the cytoplasm. It localises to the mitochondrion intermembrane space. Component of the cytosolic iron-sulfur (Fe-S) protein assembly (CIA) machinery required for the maturation of extramitochondrial Fe-S proteins. Part of an electron transfer chain functioning in an early step of cytosolic Fe-S biogenesis, facilitating the de novo assembly of a [4Fe-4S] cluster on the scaffold complex cfd1-nbp35. Electrons are transferred to dre2 from NADPH via the FAD- and FMN-containing protein tah18. Tah18-dre2 are also required for the assembly of the diferric tyrosyl radical cofactor of ribonucleotide reductase (RNR), probably by providing electrons for reduction during radical cofactor maturation in the catalytic small subunit rnr2. In Aspergillus flavus (strain ATCC 200026 / FGSC A1120 / IAM 13836 / NRRL 3357 / JCM 12722 / SRRC 167), this protein is Fe-S cluster assembly protein dre2.